Reading from the N-terminus, the 312-residue chain is MSIGKILLYYAFTPLSDPKAVQLWQRDLCESLNLRGRILISEHGINGTVGGDINDCKAYIRKTREYPGFAKMEFKWSEGGAEDFPKLSVKVRDEIVAFGAPNEIKVDENGIIGGGVHLKPEEVNQLVEERGDEVVFFDGRNAMEAQIGKFRDAVVPDVNTTHDFIKEIESGKYDDLKDKPVVTYCTGGIRCEILSSLMINRGFQEVYQIDGGIVRYGEKFGNQGLWEGSLYVFDKRMHMEFGEDYKRLGHCIHCDTPTNKFEHCVNEDECRQLVLMCPDCYANVETRHCGQDDCVEIAADLAARGVDPLVTQ.

Residues 130–225 form the Rhodanese domain; that stretch reads RGDEVVFFDG…YGEKFGNQGL (96 aa). Cys185 acts as the Cysteine persulfide intermediate in catalysis.

It belongs to the TrhO family.

It carries out the reaction uridine(34) in tRNA + AH2 + O2 = 5-hydroxyuridine(34) in tRNA + A + H2O. Functionally, catalyzes oxygen-dependent 5-hydroxyuridine (ho5U) modification at position 34 in tRNAs. The protein is tRNA uridine(34) hydroxylase of Corynebacterium efficiens (strain DSM 44549 / YS-314 / AJ 12310 / JCM 11189 / NBRC 100395).